The following is a 521-amino-acid chain: Nitric oxide reductase transcription regulator NorR2 (521 aa).

Aspartate 56 carries the 4-aspartylphosphate modification. In terms of domain architecture, Sigma-54 factor interaction spans 193-422; sequence IIGQSEAIAN…LEHVISRAAL (230 aa). ATP contacts are provided by residues 221 to 228 and 293 to 302; these read GETGVGKE and EVGELPLAIQ. A DNA-binding region (H-T-H motif) is located at residues 497–516; the sequence is WAQAARQLGIDASNLHKLAR.

The protein operates within nitrogen metabolism; nitrate reduction (denitrification) [regulation]. Its function is as follows. Required for the nitric oxide (NO) induced expression of NO reductase. Not required for expression of 2 other pathway members, nitrate reductase (nirS) and nitrous oxide reductase (nosZ). The protein is Nitric oxide reductase transcription regulator NorR2 (norR2) of Cupriavidus necator (strain ATCC 17699 / DSM 428 / KCTC 22496 / NCIMB 10442 / H16 / Stanier 337) (Ralstonia eutropha).